We begin with the raw amino-acid sequence, 65 residues long: MPKQKTHRASAKRFKRTGSGGLKRFRAFTSHRFHGKTKKQRRHLRKADLVSSGDFKRIKAMVTGL.

Residues methionine 1–arginine 16 show a composition bias toward basic residues. A disordered region spans residues methionine 1 to glycine 21.

This sequence belongs to the bacterial ribosomal protein bL35 family.

This Streptococcus pyogenes serotype M18 (strain MGAS8232) protein is Large ribosomal subunit protein bL35.